The sequence spans 367 residues: Secondary metabolism regulator laeA (367 aa).

A disordered region spans residues 1–82 (MFGQQQQQQP…PETYPGHEEN (82 aa)). Over residues 19–41 (LNHNSRWTPPNESAQPRRSSNAM) the composition is skewed to polar residues. Basic and acidic residues-rich tracts occupy residues 47–56 (TDRDPAEGHP) and 71–82 (KSPETYPGHEEN).

Belongs to the methyltransferase superfamily. LaeA methyltransferase family. As to quaternary structure, component of the heterotrimeric velvet complex composed of laeA, veA and velB; VeA acting as a bridging protein between laeA and velB.

The protein localises to the nucleus. It catalyses the reaction L-methionyl-[protein] + S-adenosyl-L-methionine = S-methyl-L-methionyl-[protein] + S-adenosyl-L-homocysteine. In terms of biological role, methyltransferase that performs automethylation. No other methyl-accepting substrate has been identified yet. Component of the velvet transcription factor complex that acts as a global regulator for secondary metabolite gene expression. Controls the expression of the monacolin K gene clusters. Also regulates pigmentation. The polypeptide is Secondary metabolism regulator laeA (Monascus pilosus (Red mold)).